We begin with the raw amino-acid sequence, 79 residues long: Acyl carrier protein 2 (79 aa).

The Carrier domain occupies 2–77 (DDIETRVRKL…QAIDYLEEAV (76 aa)). S37 carries the post-translational modification O-(pantetheine 4'-phosphoryl)serine.

It belongs to the acyl carrier protein (ACP) family. Post-translationally, 4'-phosphopantetheine is transferred from CoA to a specific serine of apo-ACP by AcpS. This modification is essential for activity because fatty acids are bound in thioester linkage to the sulfhydryl of the prosthetic group.

It localises to the cytoplasm. Its pathway is lipid metabolism; fatty acid biosynthesis. Functionally, carrier of the growing fatty acid chain in fatty acid biosynthesis. In Pseudomonas aeruginosa (strain ATCC 15692 / DSM 22644 / CIP 104116 / JCM 14847 / LMG 12228 / 1C / PRS 101 / PAO1), this protein is Acyl carrier protein 2.